We begin with the raw amino-acid sequence, 390 residues long: Protein dom34 (390 aa).

The protein belongs to the eukaryotic release factor 1 family. Pelota subfamily. In terms of assembly, component of the Dom34-Hbs1 complex, also named Pelota-HBS1L complex, composed of dom34 and hbs1. The cofactor is a divalent metal cation.

It is found in the cytoplasm. In terms of biological role, component of the Dom34-Hbs1 complex, a complex that recognizes stalled ribosomes and triggers the No-Go Decay (NGD) pathway. In the Dom34-Hbs1 complex, dom34 recognizes ribosomes stalled at the 3' end of an mRNA and engages stalled ribosomes by destabilizing mRNA in the mRNA channel. Following ribosome-binding, the Dom34-Hbs1 complex promotes the disassembly of stalled ribosomes, followed by degradation of damaged mRNAs as part of the NGD pathway. The polypeptide is Protein dom34 (Schizosaccharomyces pombe (strain 972 / ATCC 24843) (Fission yeast)).